The primary structure comprises 141 residues: Large ribosomal subunit protein uL11 (141 aa).

It belongs to the universal ribosomal protein uL11 family. In terms of assembly, part of the ribosomal stalk of the 50S ribosomal subunit. Interacts with L10 and the large rRNA to form the base of the stalk. L10 forms an elongated spine to which L12 dimers bind in a sequential fashion forming a multimeric L10(L12)X complex. In terms of processing, one or more lysine residues are methylated.

In terms of biological role, forms part of the ribosomal stalk which helps the ribosome interact with GTP-bound translation factors. This Helicobacter hepaticus (strain ATCC 51449 / 3B1) protein is Large ribosomal subunit protein uL11.